A 569-amino-acid polypeptide reads, in one-letter code: MQTEHTAELNLLWGTLILEELARLGVKHVCMAPGSRSTPLTLAAAKQSKLSQHIHFDERGLGFMALGLAKASQAPVAIITTSGTAVANLYPAIIEAWLTHVPLIVLSGDRPPELIDCGANQAIIQPAIFAQYAKQLNLPTPDLNIAPQALLSLLDDAVCNQSQPVHINCMYREPLYPNEPSVDFSRYLAPIAKWQQQTKPYSQFATMNSGQMPTSDALARFVHGKGVIVAATLAPEQQSEELIVLAQKLGWPIVTDAQSQLRQHGGAIGNIDQLLQQPKSKALLAQAEKVLVFGGRILSKRLISYLNDQDWKDYWQVLPQQQRLDPSNKPKQVWIAPAHQFAALAWPRSSQANWALNLVQFNDELETLYQQQIDHAEFGEAQAIRAIAKRQTNEQQLFIGNSLPIRLYDMFAPITTSSANVFTNRGASGIDGLLATACGVAIAGAKPTTLIIGDISALHDLNSLAIARTVTSPFVIVILNNDGGNIFNLLPVPNEQLRSDYYRLSHGLEFGFGAAMFGLAYNQVDSLSDFIESYEYAMTYSGPSVIEVTVAQNQASEQIAQISSWVKQS.

This sequence belongs to the TPP enzyme family. MenD subfamily. In terms of assembly, homodimer. It depends on Mg(2+) as a cofactor. Requires Mn(2+) as cofactor. Thiamine diphosphate is required as a cofactor.

The enzyme catalyses isochorismate + 2-oxoglutarate + H(+) = 5-enolpyruvoyl-6-hydroxy-2-succinyl-cyclohex-3-ene-1-carboxylate + CO2. It functions in the pathway quinol/quinone metabolism; 1,4-dihydroxy-2-naphthoate biosynthesis; 1,4-dihydroxy-2-naphthoate from chorismate: step 2/7. Its pathway is quinol/quinone metabolism; menaquinone biosynthesis. In terms of biological role, catalyzes the thiamine diphosphate-dependent decarboxylation of 2-oxoglutarate and the subsequent addition of the resulting succinic semialdehyde-thiamine pyrophosphate anion to isochorismate to yield 2-succinyl-5-enolpyruvyl-6-hydroxy-3-cyclohexene-1-carboxylate (SEPHCHC). This is 2-succinyl-5-enolpyruvyl-6-hydroxy-3-cyclohexene-1-carboxylate synthase from Shewanella halifaxensis (strain HAW-EB4).